Consider the following 472-residue polypeptide: MSVVHQLSAGWLLDHLSFINKINYQLHQHHEPCCRKKEFTTSVHFESLQMDSVSSSGVCAAFIASDSSTKPENDDGGNYEMFTRKFVFRPELFDVTKPYITPAVHKECQQSNEKEDLMNGVKKEISISIIGKKRKRCVVFNQGELDAMEYHTKIRELILDGSLQLIQEGLKSGFLYPLFEKQDKGSKPITLPLDACSLSELCEMAKHLPSLNEMEHQTLQLVEEDTSVTEQDLFLRVVENNSSFTKVITLMGQKYLLPPKSSFLLSDISCMQPLLNYRKTFDVIVIDPPWQNKSVKRSNRYSYLSPLQIQQIPIPKLAAPNCLLVTWVTNRQKHLRFIKEELYPSWSVEVVAEWHWVKITNSGEFVFPLDSPHKKPYEGLILGRVQEKTALPLRNADVNVLPIPDHKLIVSVPCTLHSHKPPLAEVLKDYIKPDGEYLELFARNLQPGWTSWGNEVLKFQHVDYFIAVESGS.

It belongs to the MT-A70-like family.

It localises to the nucleus. Its subcellular location is the cytoplasm. The protein resides in the cytosol. It is found in the mitochondrion matrix. The enzyme catalyses a 2'-O-methyladenosine in U2 snRNA + S-adenosyl-L-methionine = an N(6)-methyl-2'-O-methyladenosine in U2 snRNA + S-adenosyl-L-homocysteine + H(+). It carries out the reaction a 2'-deoxyadenosine in DNA + S-adenosyl-L-methionine = an N(6)-methyl-2'-deoxyadenosine in DNA + S-adenosyl-L-homocysteine + H(+). N(6)-adenine-specific methyltransferase that can methylate both RNAs and DNA. Acts as a N(6)-adenine-specific RNA methyltransferase by catalyzing formation of N6,2'-O-dimethyladenosine (m6A(m)) on internal positions of U2 small nuclear RNA (snRNA): methylates the 6th position of adenine residues with a pre-deposited 2'-O-methylation. Internal m6A(m) methylation of snRNAs regulates RNA splicing. Also able to act as a N(6)-adenine-specific DNA methyltransferase by mediating methylation of DNA on the 6th position of adenine (N(6)-methyladenosine). The existence of N(6)-methyladenosine (m6A) on DNA is however unclear in mammals, and additional evidences are required to confirm the role of the N(6)-adenine-specific DNA methyltransferase activity of METTL4 in vivo. Acts as a regulator of mitochondrial transcript levels and mitochondrial DNA (mtDNA) copy number by mediating mtDNA N(6)-methylation: m6A on mtDNA reduces transcription by repressing TFAM DNA-binding and bending. N(6)-methyladenosine deposition by METTL4 regulates Polycomb silencing by triggering ubiquitination and degradation of sensor proteins ASXL1 and MPND, leading to inactivation of the PR-DUB complex and subsequent preservation of Polycomb silencing. This chain is N(6)-adenine-specific methyltransferase METTL4, found in Homo sapiens (Human).